Here is a 110-residue protein sequence, read N- to C-terminus: Phosphoribosyl-AMP cyclohydrolase (110 aa).

A Mg(2+)-binding site is contributed by Asp80. Cys81 contributes to the Zn(2+) binding site. Positions 82 and 84 each coordinate Mg(2+). Zn(2+) is bound by residues Cys97 and Cys104.

It belongs to the PRA-CH family. Homodimer. Requires Mg(2+) as cofactor. Zn(2+) is required as a cofactor.

Its subcellular location is the cytoplasm. It carries out the reaction 1-(5-phospho-beta-D-ribosyl)-5'-AMP + H2O = 1-(5-phospho-beta-D-ribosyl)-5-[(5-phospho-beta-D-ribosylamino)methylideneamino]imidazole-4-carboxamide. Its pathway is amino-acid biosynthesis; L-histidine biosynthesis; L-histidine from 5-phospho-alpha-D-ribose 1-diphosphate: step 3/9. Its function is as follows. Catalyzes the hydrolysis of the adenine ring of phosphoribosyl-AMP. In Clostridium botulinum (strain ATCC 19397 / Type A), this protein is Phosphoribosyl-AMP cyclohydrolase.